Reading from the N-terminus, the 121-residue chain is uncharacterized protein (121 aa).

2 helical membrane-spanning segments follow: residues 16–36 (GFMV…GFAV) and 74–94 (LYIA…MKTI).

Its subcellular location is the cell membrane. This is an uncharacterized protein from Bacillus subtilis (strain 168).